A 384-amino-acid chain; its full sequence is Mannitol-1-phosphate 5-dehydrogenase (384 aa).

3–14 (AVHFGAGNIGRG) contributes to the NAD(+) binding site.

This sequence belongs to the mannitol dehydrogenase family. In terms of assembly, monomer.

The catalysed reaction is D-mannitol 1-phosphate + NAD(+) = beta-D-fructose 6-phosphate + NADH + H(+). This Enterococcus faecalis (strain ATCC 700802 / V583) protein is Mannitol-1-phosphate 5-dehydrogenase (mtlD).